A 121-amino-acid chain; its full sequence is Large ribosomal subunit protein uL18 (121 aa).

It belongs to the universal ribosomal protein uL18 family. Part of the 50S ribosomal subunit; part of the 5S rRNA/L5/L18/L25 subcomplex. Contacts the 5S and 23S rRNAs.

In terms of biological role, this is one of the proteins that bind and probably mediate the attachment of the 5S RNA into the large ribosomal subunit, where it forms part of the central protuberance. In Caldanaerobacter subterraneus subsp. tengcongensis (strain DSM 15242 / JCM 11007 / NBRC 100824 / MB4) (Thermoanaerobacter tengcongensis), this protein is Large ribosomal subunit protein uL18.